Reading from the N-terminus, the 121-residue chain is Neuropeptide-like protein 7 (121 aa).

Residues 1 to 22 form the signal peptide; sequence MYIKAALLIVVLFGVASQITSA.

Its function is as follows. May regulate lifespan in response to food availability and oxidative stress. This chain is Neuropeptide-like protein 7, found in Caenorhabditis elegans.